The following is a 347-amino-acid chain: Phosphate acyltransferase (347 aa).

Belongs to the PlsX family. Homodimer. Probably interacts with PlsY.

It localises to the cytoplasm. The catalysed reaction is a fatty acyl-[ACP] + phosphate = an acyl phosphate + holo-[ACP]. Its pathway is lipid metabolism; phospholipid metabolism. In terms of biological role, catalyzes the reversible formation of acyl-phosphate (acyl-PO(4)) from acyl-[acyl-carrier-protein] (acyl-ACP). This enzyme utilizes acyl-ACP as fatty acyl donor, but not acyl-CoA. This Pediococcus pentosaceus (strain ATCC 25745 / CCUG 21536 / LMG 10740 / 183-1w) protein is Phosphate acyltransferase.